Consider the following 548-residue polypeptide: Protein GPR108 (548 aa).

Positions 1 to 32 (MAVSERRGLGRGSPAEWGPWLLLLLLLGGSSG) are cleaved as a signal peptide. N-linked (GlcNAc...) asparagine glycans are attached at residues Asn-57, Asn-63, and Asn-109. The interval 165 to 190 (DHAGTTAAPDKAKSKPTGLQGDRQGV) is disordered. N-linked (GlcNAc...) asparagine glycans are attached at residues Asn-205 and Asn-209. Transmembrane regions (helical) follow at residues 268–288 (LYMV…SILC), 297–317 (IHWL…FHSI), 341–361 (LLKG…WAFV), 372–392 (IFGI…VMES), 406–426 (ILFL…VWSI), 454–474 (VMVI…RAVV), and 478–498 (WQWL…VLTG). N-linked (GlcNAc...) asparagine glycosylation is present at Asn-539.

It belongs to the LU7TM family.

Its subcellular location is the golgi apparatus. It localises to the cis-Golgi network membrane. It is found in the trans-Golgi network membrane. The protein resides in the golgi apparatus membrane. Its function is as follows. May play a role in intracellular immune modulation by activating NF-kappaB response and attenuating Toll-like-receptor response. This Bos taurus (Bovine) protein is Protein GPR108 (GPR108).